Reading from the N-terminus, the 252-residue chain is Putative endonuclease C1F12.06c (252 aa).

The Mg(2+) site is built by Asp-43 and Asp-114.

This sequence belongs to the endonuclease V family.

The protein localises to the cytoplasm. It localises to the nucleus. This Schizosaccharomyces pombe (strain 972 / ATCC 24843) (Fission yeast) protein is Putative endonuclease C1F12.06c.